We begin with the raw amino-acid sequence, 506 residues long: Maturase K (506 aa).

It belongs to the intron maturase 2 family. MatK subfamily.

The protein localises to the plastid. Its subcellular location is the chloroplast. Functionally, usually encoded in the trnK tRNA gene intron. Probably assists in splicing its own and other chloroplast group II introns. This Trifolium lupinaster (Lupine clover) protein is Maturase K.